Reading from the N-terminus, the 102-residue chain is Large ribosomal subunit protein bL21 (102 aa).

Belongs to the bacterial ribosomal protein bL21 family. In terms of assembly, part of the 50S ribosomal subunit. Contacts protein L20.

In terms of biological role, this protein binds to 23S rRNA in the presence of protein L20. This is Large ribosomal subunit protein bL21 from Ehrlichia chaffeensis (strain ATCC CRL-10679 / Arkansas).